Here is a 367-residue protein sequence, read N- to C-terminus: 4-hydroxy-3-methylbut-2-en-1-yl diphosphate synthase (flavodoxin) (367 aa).

4 residues coordinate [4Fe-4S] cluster: cysteine 265, cysteine 268, cysteine 300, and glutamate 307.

The protein belongs to the IspG family. Requires [4Fe-4S] cluster as cofactor.

The enzyme catalyses (2E)-4-hydroxy-3-methylbut-2-enyl diphosphate + oxidized [flavodoxin] + H2O + 2 H(+) = 2-C-methyl-D-erythritol 2,4-cyclic diphosphate + reduced [flavodoxin]. Its pathway is isoprenoid biosynthesis; isopentenyl diphosphate biosynthesis via DXP pathway; isopentenyl diphosphate from 1-deoxy-D-xylulose 5-phosphate: step 5/6. Its function is as follows. Converts 2C-methyl-D-erythritol 2,4-cyclodiphosphate (ME-2,4cPP) into 1-hydroxy-2-methyl-2-(E)-butenyl 4-diphosphate. This Bacillus anthracis protein is 4-hydroxy-3-methylbut-2-en-1-yl diphosphate synthase (flavodoxin).